Consider the following 403-residue polypeptide: Aminomethyltransferase, mitochondrial (403 aa).

The N-terminal 28 residues, 1 to 28 (MQRAVSVVARLGFRLQAFPPALCRPLSC), are a transit peptide targeting the mitochondrion. Residues Glu-232, Arg-261, and Tyr-399 each coordinate substrate.

Belongs to the GcvT family. In terms of assembly, the glycine cleavage system is composed of four proteins: P, T, L and H.

The protein localises to the mitochondrion. The enzyme catalyses N(6)-[(R)-S(8)-aminomethyldihydrolipoyl]-L-lysyl-[protein] + (6S)-5,6,7,8-tetrahydrofolate = N(6)-[(R)-dihydrolipoyl]-L-lysyl-[protein] + (6R)-5,10-methylene-5,6,7,8-tetrahydrofolate + NH4(+). Functionally, the glycine cleavage system catalyzes the degradation of glycine. The chain is Aminomethyltransferase, mitochondrial from Homo sapiens (Human).